We begin with the raw amino-acid sequence, 86 residues long: High affinity immunoglobulin epsilon receptor subunit gamma (86 aa).

The first 18 residues, methionine 1–alanine 18, serve as a signal peptide directing secretion. Residues leucine 19 to glutamine 23 are Extracellular-facing. Residues leucine 24–cysteine 44 form a helical membrane-spanning segment. Over arginine 45–glutamine 86 the chain is Cytoplasmic. An ITAM domain is found at aspartate 54 to glutamate 82. Residues tyrosine 65 and tyrosine 76 each carry the phosphotyrosine modification. Threonine 78 is modified (phosphothreonine).

Belongs to the CD3Z/FCER1G family. In terms of assembly, igE Fc receptor is a tetramer of an alpha chain, a beta chain, and two disulfide linked gamma chains. Associates with FCGR1A to form a functional receptor complex. The signaling subunit of immunoglobulin gamma (IgG) Fc receptor complex. As a homodimer or a heterodimer of CD247 and FCER1G, associates with the ligand binding subunit FCGR3A to form a functional receptor complex. Associates with CLEC6A. Interacts with CLEC4E. Interacts (via ITAM domain) with SYK (via SH2 domains); activates SYK, enabling integrin-mediated activation of neutrophils and macrophages. Interacts with common beta chain of interleukin 3 receptor CSF2RB and recruits SYK in response to IL3 stimulation; this interaction is direct. Interacts with CD300LH; the interaction may be indirect. Interacts with CD300LD. Interacts with TARM1. In terms of tissue distribution, expressed in leukocytes and pinealocytes. Expression in the pineal gland does not undergo circadian variations.

The protein resides in the cell membrane. Adapter protein containing an immunoreceptor tyrosine-based activation motif (ITAM) that transduces activation signals from various immunoreceptors. As a component of the high-affinity immunoglobulin E (IgE) receptor, mediates allergic inflammatory signaling in mast cells. As a constitutive component of interleukin-3 receptor complex, selectively mediates interleukin 4/IL4 production by basophils priming T-cells toward effector T-helper 2 subset. Associates with pattern recognition receptors CLEC4D and CLEC4E to form a functional signaling complex in myeloid cells. Binding of mycobacterial trehalose 6,6'-dimycolate (TDM) to this receptor complex leads to phosphorylation of ITAM, triggering activation of SYK, CARD9 and NF-kappa-B, consequently driving maturation of antigen-presenting cells and shaping antigen-specific priming of T-cells toward effector T-helper 1 and T-helper 17 cell subtypes. May function cooperatively with other activating receptors. Functionally linked to integrin beta-2/ITGB2-mediated neutrophil activation. Also involved in integrin alpha-2/ITGA2-mediated platelet activation. This Rattus norvegicus (Rat) protein is High affinity immunoglobulin epsilon receptor subunit gamma (Fcer1g).